We begin with the raw amino-acid sequence, 188 residues long: Putative 3-methyladenine DNA glycosylase (188 aa).

Belongs to the DNA glycosylase MPG family.

This chain is Putative 3-methyladenine DNA glycosylase, found in Ehrlichia ruminantium (strain Welgevonden).